An 89-amino-acid chain; its full sequence is Small ribosomal subunit protein uS15 (89 aa).

Residues 1–13 (MYLTSEKKEEIFS) are compositionally biased toward basic and acidic residues. A disordered region spans residues 1–24 (MYLTSEKKEEIFSKHGKGKNDTGS).

The protein belongs to the universal ribosomal protein uS15 family. As to quaternary structure, part of the 30S ribosomal subunit. Forms a bridge to the 50S subunit in the 70S ribosome, contacting the 23S rRNA.

In terms of biological role, one of the primary rRNA binding proteins, it binds directly to 16S rRNA where it helps nucleate assembly of the platform of the 30S subunit by binding and bridging several RNA helices of the 16S rRNA. Forms an intersubunit bridge (bridge B4) with the 23S rRNA of the 50S subunit in the ribosome. This is Small ribosomal subunit protein uS15 from Christiangramia forsetii (strain DSM 17595 / CGMCC 1.15422 / KT0803) (Gramella forsetii).